The primary structure comprises 637 residues: Chaperone protein HtpG (637 aa).

The interval 1 to 348 (MAEAGQMEKH…SNDLPLNVSR (348 aa)) is a; substrate-binding. The b stretch occupies residues 349–565 (EILQDNKITR…DNDMSTQMAK (217 aa)). Positions 566 to 637 (LMEAAGQAVP…TRLNKLMLNA (72 aa)) are c.

Belongs to the heat shock protein 90 family. In terms of assembly, homodimer.

It localises to the cytoplasm. Functionally, molecular chaperone. Has ATPase activity. This Idiomarina loihiensis (strain ATCC BAA-735 / DSM 15497 / L2-TR) protein is Chaperone protein HtpG.